We begin with the raw amino-acid sequence, 389 residues long: 11-beta-hydroxysteroid dehydrogenase-like 5 (389 aa).

The chain crosses the membrane as a helical; Signal-anchor for type II membrane protein span at residues 11 to 31 (LVAPPATMVVMAFAWPLLSFI). Residues 56-82 (GASSAIGEQIAYEYAKRGANLVLVARR) and Asp107 each bind NADP(+). Ser186 contributes to the substrate binding site. Residue Tyr199 is the Proton acceptor of the active site. Residues 199-203 (YSAAK) and Lys203 each bind NADP(+). The tract at residues 337–381 (LMLEGGPPRVPASPPRYTASPPHYTASPPRYPASPPRYPASPPRF) is disordered. Pro residues predominate over residues 365 to 378 (PRYPASPPRYPASP).

Belongs to the short-chain dehydrogenases/reductases (SDR) family.

Its subcellular location is the membrane. In Arabidopsis thaliana (Mouse-ear cress), this protein is 11-beta-hydroxysteroid dehydrogenase-like 5 (HSD5).